The following is a 161-amino-acid chain: Large ribosomal subunit protein eL21 (161 aa).

Belongs to the eukaryotic ribosomal protein eL21 family.

The protein is Large ribosomal subunit protein eL21 (rpl-21) of Caenorhabditis elegans.